A 306-amino-acid polypeptide reads, in one-letter code: 4-hydroxy-tetrahydrodipicolinate synthase (306 aa).

Thr-49 contributes to the pyruvate binding site. Catalysis depends on Tyr-136, which acts as the Proton donor/acceptor. Lys-164 functions as the Schiff-base intermediate with substrate in the catalytic mechanism. Ile-207 provides a ligand contact to pyruvate.

The protein belongs to the DapA family. Homotetramer; dimer of dimers.

The protein localises to the cytoplasm. The enzyme catalyses L-aspartate 4-semialdehyde + pyruvate = (2S,4S)-4-hydroxy-2,3,4,5-tetrahydrodipicolinate + H2O + H(+). Its pathway is amino-acid biosynthesis; L-lysine biosynthesis via DAP pathway; (S)-tetrahydrodipicolinate from L-aspartate: step 3/4. In terms of biological role, catalyzes the condensation of (S)-aspartate-beta-semialdehyde [(S)-ASA] and pyruvate to 4-hydroxy-tetrahydrodipicolinate (HTPA). This chain is 4-hydroxy-tetrahydrodipicolinate synthase, found in Haloarcula marismortui (strain ATCC 43049 / DSM 3752 / JCM 8966 / VKM B-1809) (Halobacterium marismortui).